We begin with the raw amino-acid sequence, 151 residues long: Ribosome maturation factor RimP (151 aa).

This sequence belongs to the RimP family.

Its subcellular location is the cytoplasm. Its function is as follows. Required for maturation of 30S ribosomal subunits. This Vibrio parahaemolyticus serotype O3:K6 (strain RIMD 2210633) protein is Ribosome maturation factor RimP.